Reading from the N-terminus, the 366-residue chain is Chorismate synthase (366 aa).

Arg48 is an NADP(+) binding site. Residues 125 to 127 (RSS), 238 to 239 (NA), Gly278, 293 to 297 (KPTSS), and Arg319 contribute to the FMN site.

The protein belongs to the chorismate synthase family. As to quaternary structure, homotetramer. Requires FMNH2 as cofactor.

The catalysed reaction is 5-O-(1-carboxyvinyl)-3-phosphoshikimate = chorismate + phosphate. It participates in metabolic intermediate biosynthesis; chorismate biosynthesis; chorismate from D-erythrose 4-phosphate and phosphoenolpyruvate: step 7/7. In terms of biological role, catalyzes the anti-1,4-elimination of the C-3 phosphate and the C-6 proR hydrogen from 5-enolpyruvylshikimate-3-phosphate (EPSP) to yield chorismate, which is the branch point compound that serves as the starting substrate for the three terminal pathways of aromatic amino acid biosynthesis. This reaction introduces a second double bond into the aromatic ring system. This is Chorismate synthase from Alkalilimnicola ehrlichii (strain ATCC BAA-1101 / DSM 17681 / MLHE-1).